The chain runs to 119 residues: Phospholipase A2 A2-actitoxin-Cgg2a (119 aa).

Disulfide bonds link cysteine 25-cysteine 119, cysteine 27-cysteine 43, cysteine 42-cysteine 101, cysteine 49-cysteine 94, cysteine 61-cysteine 87, and cysteine 78-cysteine 92. Ca(2+) is bound by residues glycine 28 and glycine 30. Histidine 46 is a catalytic residue. Ca(2+) is bound at residue aspartate 47. The active site involves aspartate 95.

It belongs to the phospholipase A2 family. In terms of assembly, homodimer. Requires Ca(2+) as cofactor.

The protein localises to the secreted. It localises to the nematocyst. It catalyses the reaction a 1,2-diacyl-sn-glycero-3-phosphocholine + H2O = a 1-acyl-sn-glycero-3-phosphocholine + a fatty acid + H(+). Its function is as follows. Sea anemone phospholipase A2 (PLA2). When incubated with plasma, this protein shows a moderate anticoagulant activity (0.15 ug of enzyme/200 uL of plasma), inhibiting clotting induced by thrombin. This enzyme also induces myotoxicity, and edema. PLA2 catalyzes the calcium-dependent hydrolysis of the 2-acyl groups in 3-sn-phosphoglycerides. The chain is Phospholipase A2 A2-actitoxin-Cgg2a from Condylactis gigantea (Giant Caribbean anemone).